A 118-amino-acid polypeptide reads, in one-letter code: Large ribosomal subunit protein uL18 (118 aa).

Belongs to the universal ribosomal protein uL18 family. Part of the 50S ribosomal subunit; part of the 5S rRNA/L5/L18/L25 subcomplex. Contacts the 5S and 23S rRNAs.

In terms of biological role, this is one of the proteins that bind and probably mediate the attachment of the 5S RNA into the large ribosomal subunit, where it forms part of the central protuberance. This is Large ribosomal subunit protein uL18 from Ligilactobacillus salivarius (strain UCC118) (Lactobacillus salivarius).